A 107-amino-acid chain; its full sequence is Protein RnfH (107 aa).

The segment at alanine 82–arginine 107 is disordered.

This sequence belongs to the UPF0125 (RnfH) family.

The sequence is that of Protein RnfH from Pseudoalteromonas translucida (strain TAC 125).